A 327-amino-acid polypeptide reads, in one-letter code: Fructose-1,6-bisphosphatase class 1 (327 aa).

Mg(2+)-binding residues include Glu-84, Asp-103, Leu-105, and Asp-106. Substrate is bound by residues 106 to 109 (DGSS), Asn-198, and Lys-264. Glu-270 lines the Mg(2+) pocket.

Belongs to the FBPase class 1 family. In terms of assembly, homotetramer. Requires Mg(2+) as cofactor.

It is found in the cytoplasm. It catalyses the reaction beta-D-fructose 1,6-bisphosphate + H2O = beta-D-fructose 6-phosphate + phosphate. It participates in carbohydrate biosynthesis; gluconeogenesis. The sequence is that of Fructose-1,6-bisphosphatase class 1 from Psychrobacter cryohalolentis (strain ATCC BAA-1226 / DSM 17306 / VKM B-2378 / K5).